Here is a 103-residue protein sequence, read N- to C-terminus: Putative septation protein SpoVG (103 aa).

The protein belongs to the SpoVG family.

Could be involved in septation. The protein is Putative septation protein SpoVG of Exiguobacterium sibiricum (strain DSM 17290 / CCUG 55495 / CIP 109462 / JCM 13490 / 255-15).